The following is a 1907-amino-acid chain: Receptor-type tyrosine-protein phosphatase F (1907 aa).

Residues M1–G29 form the signal peptide. At D30–W1263 the chain is on the extracellular side. Ig-like C2-type domains follow at residues P33–S123, P135–Y224, and P232–T314. The cysteines at positions 54 and 107 are disulfide-linked. A heparin-binding site is contributed by K68–R77. N117 is a glycosylation site (N-linked (GlcNAc...) asparagine). C156 and C207 are oxidised to a cystine. Residues N250 and N295 are each glycosylated (N-linked (GlcNAc...) asparagine). C253 and C298 form a disulfide bridge. 8 Fibronectin type-III domains span residues P321 to Q411, P416 to G510, Q514 to S604, P609 to D706, P711 to A819, V820 to L914, F918 to V1010, and F1014 to D1098. The interval G398–P417 is disordered. Residues G693–P712 form a disordered region. Residue N721 is glycosylated (N-linked (GlcNAc...) asparagine). Residue N966 is glycosylated (N-linked (GlcNAc...) asparagine). Residues V1264 to F1284 traverse the membrane as a helical segment. Topologically, residues K1285 to T1907 are cytoplasmic. S1305 is subject to Phosphoserine. Tyrosine-protein phosphatase domains follow at residues F1352–A1607 and M1639–Y1898. Substrate contacts are provided by residues D1516, C1548–R1554, and Q1592. The active-site Phosphocysteine intermediate is the C1548. C1839 acts as the Phosphocysteine intermediate in catalysis.

It belongs to the protein-tyrosine phosphatase family. Receptor class 2A subfamily. In terms of assembly, interacts with GRIP1. Interacts with PPFIA1, PPFIA2 and PPFIA3. Interacts with INSR.

The protein localises to the membrane. The enzyme catalyses O-phospho-L-tyrosyl-[protein] + H2O = L-tyrosyl-[protein] + phosphate. Functionally, possible cell adhesion receptor. It possesses an intrinsic protein tyrosine phosphatase activity (PTPase) and dephosphorylates EPHA2 regulating its activity. In terms of biological role, the first PTPase domain has enzymatic activity, while the second one seems to affect the substrate specificity of the first one. This Homo sapiens (Human) protein is Receptor-type tyrosine-protein phosphatase F (PTPRF).